An 802-amino-acid chain; its full sequence is Mitochondrial inner membrane m-AAA protease component AFG3L2 (802 aa).

A mitochondrion-targeting transit peptide spans 1 to 38 (MAHRCLLLWSRGGCRRGLPPLLVPRGCLGPDRRPCLRT). The propeptide at 39-66 (LYQYATVQTASSRRSLLRDVIAAYQRFC) is removed in mature form. The interval 76 to 124 (YFPNGKNGKKASEPKEAVGEKKEPQPSGPQPSGGAGGGGGKRRGKKEDS) is disordered. The segment covering 85-99 (KASEPKEAVGEKKEP) has biased composition (basic and acidic residues). Position 116 is an N6-succinyllysine (Lys116). The next 2 membrane-spanning stretches (helical) occupy residues 142–162 (FRMY…YFVF) and 250–270 (GSFL…LYTI). Residues Val309, Ala310, Thr351, Gly352, Lys353, Thr354, Leu355, and His489 each coordinate ATP. Residue His573 participates in Zn(2+) binding. Glu574 is a catalytic residue. 2 residues coordinate Zn(2+): His577 and Asp648. The disordered stretch occupies residues 759–802 (VEGTGSLDEDTSLPEGLQDWNKEREKEEKKEKEKEEPLNEKVVS). Positions 778-802 (WNKEREKEEKKEKEKEEPLNEKVVS) are enriched in basic and acidic residues.

It in the N-terminal section; belongs to the AAA ATPase family. The protein in the C-terminal section; belongs to the peptidase M41 family. Homohexamer. Forms heterohexamers with SPG7 and AFG3L1. The m-AAA protease is either composed of homohexamers of AFG3L2 or heterohexamers of AFG3L1, AFG3L2 and/or SPG7. Interacts with MAIP1. Interacts with DNAJC19. Interacts with PHB2. Zn(2+) serves as cofactor. Upon import into the mitochondrion, the N-terminal transit peptide is cleaved to generate an intermediate form which undergoes autocatalytic proteolytic processing to generate the proteolytically active mature form. In terms of tissue distribution, highly expressed in the cerebellar Purkinje cells.

Its subcellular location is the mitochondrion inner membrane. It carries out the reaction ATP + H2O = ADP + phosphate + H(+). In terms of biological role, catalytic component of the m-AAA protease, a protease that plays a key role in proteostasis of inner mitochondrial membrane proteins, and which is essential for axonal and neuron development. AFG3L2 possesses both ATPase and protease activities: the ATPase activity is required to unfold substrates, threading them into the internal proteolytic cavity for hydrolysis into small peptide fragments. The m-AAA protease carries out protein quality control in the inner membrane of the mitochondria by mediating degradation of mistranslated or misfolded polypeptides. The m-AAA protease complex also promotes the processing and maturation of mitochondrial proteins, such as MRPL32/bL32m, PINK1 and SP7. Mediates protein maturation of the mitochondrial ribosomal subunit MRPL32/bL32m by catalyzing the cleavage of the presequence of MRPL32/bL32m prior to assembly into the mitochondrial ribosome. Required for SPG7 maturation into its active mature form after SPG7 cleavage by mitochondrial-processing peptidase (MPP). Required for the maturation of PINK1 into its 52kDa mature form after its cleavage by mitochondrial-processing peptidase (MPP). Acts as a regulator of calcium in neurons by mediating degradation of SMDT1/EMRE before its assembly with the uniporter complex, limiting the availability of SMDT1/EMRE for MCU assembly and promoting efficient assembly of gatekeeper subunits with MCU. Promotes the proteolytic degradation of GHITM upon hyperpolarization of mitochondria: progressive GHITM degradation leads to respiratory complex I degradation and broad reshaping of the mitochondrial proteome by AFG3L2. Also acts as a regulator of mitochondrial glutathione homeostasis by mediating cleavage and degradation of SLC25A39. SLC25A39 cleavage is prevented when SLC25A39 binds iron-sulfur. Involved in the regulation of OMA1-dependent processing of OPA1. May act by mediating processing of OMA1 precursor, participating in OMA1 maturation. This is Mitochondrial inner membrane m-AAA protease component AFG3L2 from Mus musculus (Mouse).